The sequence spans 273 residues: Kit ligand (273 aa).

An N-terminal signal peptide occupies residues 1 to 25; it reads MKKTQTWIITCIYLQLLLFNPLVKT. The Extracellular portion of the chain corresponds to 26-214; that stretch reads KEICGNPVTD…AKAPEDSGLQ (189 aa). Cystine bridges form between cysteine 29–cysteine 114 and cysteine 68–cysteine 163. 4 N-linked (GlcNAc...) asparagine glycosylation sites follow: asparagine 90, asparagine 97, asparagine 145, and asparagine 195. The interval 190 to 210 is disordered; the sequence is ASSLRNDSSSSNRKAAKAPED. Residues 191 to 202 show a composition bias toward low complexity; it reads SSLRNDSSSSNR. The helical transmembrane segment at 215-237 threads the bilayer; that stretch reads WTAMALPALISLVIGFAFGALYW. At 238–273 the chain is on the cytoplasmic side; the sequence is KKKQSSLTRAVENIQINEEDNEISMLQQKEREFQEV.

Belongs to the SCF family. Homodimer, non-covalently linked. Heterotetramer with KIT, binding two KIT molecules; thereby mediates KIT dimerization and subsequent activation by autophosphorylation. In terms of processing, a soluble form is produced by proteolytic processing of isoform 1 in the extracellular domain. Expressed in the cochlea.

Its subcellular location is the cell membrane. The protein localises to the cytoplasm. The protein resides in the cytoskeleton. It localises to the cell projection. It is found in the lamellipodium. Its subcellular location is the filopodium. The protein localises to the secreted. In terms of biological role, ligand for the receptor-type protein-tyrosine kinase KIT. Plays an essential role in the regulation of cell survival and proliferation, hematopoiesis, stem cell maintenance, gametogenesis, mast cell development, migration and function, and in melanogenesis. KITLG/SCF binding can activate several signaling pathways. Promotes phosphorylation of PIK3R1, the regulatory subunit of phosphatidylinositol 3-kinase, and subsequent activation of the kinase AKT1. KITLG/SCF and KIT also transmit signals via GRB2 and activation of RAS, RAF1 and the MAP kinases MAPK1/ERK2 and/or MAPK3/ERK1. KITLG/SCF and KIT promote activation of STAT family members STAT1, STAT3 and STAT5. KITLG/SCF and KIT promote activation of PLCG1, leading to the production of the cellular signaling molecules diacylglycerol and inositol 1,4,5-trisphosphate. KITLG/SCF acts synergistically with other cytokines, probably interleukins. The chain is Kit ligand (Kitlg) from Mus musculus (Mouse).